The following is a 123-amino-acid chain: Zinc metalloproteinase-disintegrin-like jerdohagin (123 aa).

The Peptidase M12B domain occupies 6–52 (RYLYIRHDREACTCHANSCIMSAYFSNSHVQYENYINDCKPQCILNE). H12 lines the Zn(2+) pocket. An intrachain disulfide couples C19 to C24. Ca(2+) is bound by residues C48 and N51. Residues 53–80 (LHSWVECESGECCEQCRSECDIAESCTN) enclose the Disintegrin domain. Cystine bridges form between C59–C65, C64–C78, C72–C90, and C106–C116. The D/ECD-tripeptide motif lies at 71-73 (ECD).

Belongs to the venom metalloproteinase (M12B) family. P-III subfamily. P-IIIa sub-subfamily. Monomer. Requires Zn(2+) as cofactor. In terms of processing, the N-terminus is blocked. Expressed by the venom gland.

It localises to the secreted. Its proteolytic and hemorrhagic activities are inhibited by EDTA, but not by PMSF. Functionally, snake venom metalloproteinase that has high hemorrhagic activity and degrades the alpha-chain of fibrinogen (FGA), leaving the beta- and the gamma-chain intact. It may also inhibit platelet aggregation. Cleaves insulin B chain at '25-Phe-|-Val-26', '26-Val-|-Asn-27', '29-His-|-Leu-30', '30-Leu-|-Cys-31', '33-Ser-|-His-34', '35-Leu-|-Val-36', '40-Tyr-|-Leu-41', '41-Leu-|-Val-42', '42-Val-|-Cys-43', '43-Cys-|-Gly-44', '44-Gly-|-Glu-45', '46-Arg-|-Gly-47', '47-Gly-|-Phe-48', '49-Phe-|-Tyr-50' and '52-Pro-|-Lys-53' bonds. Also cleaves human prothrombin (72 kDa) and activation fragment F1 (27 kDa) of activated human prothrombin, to generate two new proteins of 68 and 23 kDa. The chain is Zinc metalloproteinase-disintegrin-like jerdohagin from Protobothrops jerdonii (Jerdon's pitviper).